The following is a 219-amino-acid chain: Vacuolar protein sorting-associated protein 32 homolog 2 (219 aa).

Coiled coils occupy residues 10–41 (KQEA…KKAG) and 117–176 (TNID…QLLQ). Positions 168–219 (EELESQLLQPATTAPPLPSVPVPAGRQPARPVPQKRTAEEEELAALQAEMAL) are disordered.

The protein belongs to the SNF7 family. As to quaternary structure, component of the endosomal sorting required for transport complex III (ESCRT-III), composed at least of VPS2, VPS20, VPS24 and VPS32. Interacts with SKD1. Interacts with BRO1/ALIX.

Its subcellular location is the endosome. In terms of biological role, component of the ESCRT-III complex, which is required for multivesicular bodies (MVBs) formation and sorting of endosomal cargo proteins into MVBs. The ESCRT-III complex is probably involved in the concentration of MVB cargo. The polypeptide is Vacuolar protein sorting-associated protein 32 homolog 2 (VPS32.2) (Arabidopsis thaliana (Mouse-ear cress)).